Reading from the N-terminus, the 160-residue chain is Small ribosomal subunit protein uS7A (160 aa).

It belongs to the universal ribosomal protein uS7 family. Part of the 30S ribosomal subunit. Contacts proteins S9 and S11.

In terms of biological role, one of the primary rRNA binding proteins, it binds directly to 16S rRNA where it nucleates assembly of the head domain of the 30S subunit. Is located at the subunit interface close to the decoding center, probably blocks exit of the E-site tRNA. The polypeptide is Small ribosomal subunit protein uS7A (Aquifex aeolicus (strain VF5)).